Consider the following 122-residue polypeptide: U19-hexatoxin-Hi1a (122 aa).

The signal sequence occupies residues 1–18 (MNTMIGFIVLLVSATVLG). A propeptide spanning residues 19-80 (DPELDALRKE…YENSNFREKR (62 aa)) is cleaved from the precursor. 3 disulfide bridges follow: cysteine 81–cysteine 96, cysteine 88–cysteine 101, and cysteine 95–cysteine 116.

As to expression, expressed by the venom gland.

The protein localises to the secreted. Functionally, probable ion channel inhibitor. The chain is U19-hexatoxin-Hi1a from Hadronyche infensa (Fraser island funnel-web spider).